A 252-amino-acid polypeptide reads, in one-letter code: 2-succinyl-6-hydroxy-2,4-cyclohexadiene-1-carboxylate synthase (252 aa).

This sequence belongs to the AB hydrolase superfamily. MenH family. Monomer.

The enzyme catalyses 5-enolpyruvoyl-6-hydroxy-2-succinyl-cyclohex-3-ene-1-carboxylate = (1R,6R)-6-hydroxy-2-succinyl-cyclohexa-2,4-diene-1-carboxylate + pyruvate. The protein operates within quinol/quinone metabolism; 1,4-dihydroxy-2-naphthoate biosynthesis; 1,4-dihydroxy-2-naphthoate from chorismate: step 3/7. It functions in the pathway quinol/quinone metabolism; menaquinone biosynthesis. In terms of biological role, catalyzes a proton abstraction reaction that results in 2,5-elimination of pyruvate from 2-succinyl-5-enolpyruvyl-6-hydroxy-3-cyclohexene-1-carboxylate (SEPHCHC) and the formation of 2-succinyl-6-hydroxy-2,4-cyclohexadiene-1-carboxylate (SHCHC). The chain is 2-succinyl-6-hydroxy-2,4-cyclohexadiene-1-carboxylate synthase from Salmonella heidelberg (strain SL476).